The following is a 126-amino-acid chain: Large ribosomal subunit protein bL12 (126 aa).

Belongs to the bacterial ribosomal protein bL12 family. In terms of assembly, homodimer. Part of the ribosomal stalk of the 50S ribosomal subunit. Forms a multimeric L10(L12)X complex, where L10 forms an elongated spine to which 2 to 4 L12 dimers bind in a sequential fashion. Binds GTP-bound translation factors.

Functionally, forms part of the ribosomal stalk which helps the ribosome interact with GTP-bound translation factors. Is thus essential for accurate translation. The polypeptide is Large ribosomal subunit protein bL12 (Nitrosospira multiformis (strain ATCC 25196 / NCIMB 11849 / C 71)).